Here is a 339-residue protein sequence, read N- to C-terminus: Glyceraldehyde-3-phosphate dehydrogenase (339 aa).

NAD(+) contacts are provided by residues 12–13 (RI), D34, and K79. Residues 150-152 (SCT), T181, 210-211 (TG), and R233 contribute to the D-glyceraldehyde 3-phosphate site. C151 serves as the catalytic Nucleophile. Residue N316 participates in NAD(+) binding.

This sequence belongs to the glyceraldehyde-3-phosphate dehydrogenase family. Homotetramer.

The protein localises to the cytoplasm. It catalyses the reaction D-glyceraldehyde 3-phosphate + phosphate + NAD(+) = (2R)-3-phospho-glyceroyl phosphate + NADH + H(+). It participates in carbohydrate degradation; glycolysis; pyruvate from D-glyceraldehyde 3-phosphate: step 1/5. This is Glyceraldehyde-3-phosphate dehydrogenase (GPD) from Cryptococcus neoformans var. neoformans serotype D (strain B-3501A) (Filobasidiella neoformans).